A 333-amino-acid polypeptide reads, in one-letter code: Serine/threonine-protein phosphatase PP1-beta (333 aa).

Residues Asp-63, His-65, Asp-91, and Asn-123 each contribute to the Mn(2+) site. Catalysis depends on His-124, which acts as the Proton donor. 2 residues coordinate Mn(2+): His-172 and His-247. Residues 306 to 333 are disordered; it reads GAGGVGSNRPVTPPRNAPAAQPKKGAKK. Residues 322 to 333 are compositionally biased toward low complexity; it reads APAAQPKKGAKK.

The protein belongs to the PPP phosphatase family. PP-1 subfamily. In terms of assembly, interacts with lab-1; the interaction is direct. Interacts with knl-1; the interaction is direct. Mn(2+) serves as cofactor. As to expression, expressed in gonads, nervous system, intestine and muscles.

The protein localises to the cytoplasm. The protein resides in the nucleus. The enzyme catalyses O-phospho-L-seryl-[protein] + H2O = L-seryl-[protein] + phosphate. The catalysed reaction is O-phospho-L-threonyl-[protein] + H2O = L-threonyl-[protein] + phosphate. Inhibited by okadaic acid. Serine/threonine-protein phosphatase essential for chromosomal dynamics during meiosis and mitosis. During meiosis, promotes chromosomal cohesion and germline immortality via a small RNA-mediated genome silencing pathway. Antagonizes the function of air-2 kinase during meiosis I and mitosis to promote chromatid cohesion and spindle attachment. Dephosphorylates histone H3 at 'Ser-10'. Dephosphorylates histone H3 at 'Thr-3'. Also involved in the activation of chloride channel clh-3 during cell swelling and meiotic maturation. Promotes small RNA-mediated genome silencing over multiple generations. Essential for embryogenesis. This is Serine/threonine-protein phosphatase PP1-beta from Caenorhabditis elegans.